The sequence spans 256 residues: PHD finger protein ALFIN-LIKE 4 (256 aa).

The disordered stretch occupies residues 149-195 (QSKTANGSSKNKSGSKPPKRPNSDSKPQKQVQAKYEEENGGRGNGGD). The span at 154-164 (NGSSKNKSGSK) shows a compositional bias: low complexity. The segment at 200–252 (ETICGACGEAYANGEFWICCDICETWFHGKCVRITPAKAEHIKHYKCPGCSNK) adopts a PHD-type zinc-finger fold.

The protein belongs to the Alfin family. Interacts with H3K4me3 and to a lesser extent with H3K4me2.

Its subcellular location is the nucleus. Functionally, histone-binding component that specifically recognizes H3 tails trimethylated on 'Lys-4' (H3K4me3), which mark transcription start sites of virtually all active genes. This is PHD finger protein ALFIN-LIKE 4 from Oryza sativa subsp. indica (Rice).